Reading from the N-terminus, the 902-residue chain is Transcription factor E2F7 (902 aa).

Residue Ser96 is modified to Phosphoserine. Residues 143-212 mediate DNA binding; sequence RKQKSLGLLC…VAKNQYGWHG (70 aa). Residues 253–269 are compositionally biased toward basic and acidic residues; it reads ERRKDGSPDPRDQHLLD. The segment at 253 to 283 is disordered; that stretch reads ERRKDGSPDPRDQHLLDFSESDYPSSSANSR. Residues 283 to 368 mediate DNA binding; it reads RKDKSLRIMS…GRKPAFKWIG (86 aa). Ser411 is subject to Phosphoserine. 3 disordered regions span residues 418-439, 589-627, and 665-690; these read SEKIQRKVNSEPSSPQGGKQGP, LCEERNPLEDDEPAVKRQSREFEDSPLSLVMPKKPSNST, and NGFIASECGNPSRNPDTEKSSNDNEI. 2 stretches are compositionally biased toward basic and acidic residues: residues 589–611 and 679–690; these read LCEERNPLEDDEPAVKRQSREFE and PDTEKSSNDNEI. At Ser832 the chain carries Phosphoserine. Residues 844-902 form a disordered region; that stretch reads KAEQSPAPATPKSIQRRHRETFFKTPGSLGDPAFRRERNQSRNTSSAQRRLEISSSGPD. The span at 884–902 shows a compositional bias: polar residues; the sequence is SRNTSSAQRRLEISSSGPD.

Belongs to the E2F/DP family. In terms of assembly, homodimer and heterodimer: mainly forms homodimers and, to a lesser extent, heterodimers with E2F8. Dimerization is important for DNA-binding. Interacts with HIF1A. Interacts with MN1.

The protein resides in the nucleus. Functionally, atypical E2F transcription factor that participates in various processes such as angiogenesis, polyploidization of specialized cells and DNA damage response. Mainly acts as a transcription repressor that binds DNA independently of DP proteins and specifically recognizes the E2 recognition site 5'-TTTC[CG]CGC-3'. Directly represses transcription of classical E2F transcription factors such as E2F1. Acts as a regulator of S-phase by recognizing and binding the E2-related site 5'-TTCCCGCC-3' and mediating repression of G1/S-regulated genes. Plays a key role in polyploidization of cells in placenta and liver by regulating the endocycle, probably by repressing genes promoting cytokinesis and antagonizing action of classical E2F proteins (E2F1, E2F2 and/or E2F3). Required for placental development by promoting polyploidization of trophoblast giant cells. Also involved in DNA damage response: up-regulated by p53/TP53 following genotoxic stress and acts as a downstream effector of p53/TP53-dependent repression by mediating repression of indirect p53/TP53 target genes involved in DNA replication. Acts as a promoter of sprouting angiogenesis, possibly by acting as a transcription activator: associates with HIF1A, recognizes and binds the VEGFA promoter, which is different from canonical E2 recognition site, and activates expression of the VEGFA gene. Acts as a negative regulator of keratinocyte differentiation. The sequence is that of Transcription factor E2F7 (E2f7) from Rattus norvegicus (Rat).